We begin with the raw amino-acid sequence, 141 residues long: Hemoglobin subunit alpha (141 aa).

In terms of domain architecture, Globin spans 1–141 (VLSAADKSNV…VSTVLTSKYR (141 aa)). Position 3 is a phosphoserine (S3). N6-succinyllysine occurs at positions 7 and 11. K16 carries the N6-acetyllysine; alternate modification. N6-succinyllysine; alternate is present on K16. Y24 is subject to Phosphotyrosine. S35 bears the Phosphoserine mark. K40 bears the N6-succinyllysine mark. S49 carries the post-translational modification Phosphoserine. H58 contacts O2. Residue H87 coordinates heme b. Phosphoserine is present on S102. The residue at position 108 (T108) is a Phosphothreonine. S124 is modified (phosphoserine). Phosphothreonine occurs at positions 134 and 137. The residue at position 138 (S138) is a Phosphoserine.

The protein belongs to the globin family. Heterotetramer of two alpha chains and two beta chains. In terms of tissue distribution, red blood cells.

Functionally, involved in oxygen transport from the lung to the various peripheral tissues. In terms of biological role, hemopressin acts as an antagonist peptide of the cannabinoid receptor CNR1. Hemopressin-binding efficiently blocks cannabinoid receptor CNR1 and subsequent signaling. The protein is Hemoglobin subunit alpha (HBA) of Felis catus (Cat).